Consider the following 494-residue polypeptide: 3-octaprenyl-4-hydroxybenzoate carboxy-lyase (494 aa).

A Mn(2+)-binding site is contributed by Asn172. Prenylated FMN contacts are provided by residues 175–177 (IYR), 189–191 (RWL), and 194–195 (RG). Glu238 contributes to the Mn(2+) binding site. Asp287 serves as the catalytic Proton donor.

The protein belongs to the UbiD family. As to quaternary structure, homohexamer. Requires prenylated FMN as cofactor. It depends on Mn(2+) as a cofactor.

The protein localises to the cell membrane. The enzyme catalyses a 4-hydroxy-3-(all-trans-polyprenyl)benzoate + H(+) = a 2-(all-trans-polyprenyl)phenol + CO2. It functions in the pathway cofactor biosynthesis; ubiquinone biosynthesis. Catalyzes the decarboxylation of 3-octaprenyl-4-hydroxy benzoate to 2-octaprenylphenol, an intermediate step in ubiquinone biosynthesis. This Cronobacter sakazakii (strain ATCC BAA-894) (Enterobacter sakazakii) protein is 3-octaprenyl-4-hydroxybenzoate carboxy-lyase.